The chain runs to 105 residues: MTKSELISKLAERFPQLLAKDAELVVKIILDAMAKSLARGERIEIRGFGSFDLNYRPSRVGRNPKSGEKVHVPEKYVPHFKAGKKMRELIDSSHKQHNLLDQATG.

Belongs to the bacterial histone-like protein family. In terms of assembly, heterodimer of an alpha and a beta chain.

Functionally, this protein is one of the two subunits of integration host factor, a specific DNA-binding protein that functions in genetic recombination as well as in transcriptional and translational control. The polypeptide is Integration host factor subunit beta (Nitrosomonas eutropha (strain DSM 101675 / C91 / Nm57)).